Consider the following 47-residue polypeptide: Photosystem II reaction center protein K (47 aa).

Positions 1 to 10 (MAAFSLDLLA) are excised as a propeptide. The chain crosses the membrane as a helical span at residues 19–39 (FGPLIDILPIIPVFFLLLAFV).

This sequence belongs to the PsbK family. PSII is composed of 1 copy each of membrane proteins PsbA, PsbB, PsbC, PsbD, PsbE, PsbF, PsbH, PsbI, PsbJ, PsbK, PsbL, PsbM, PsbT, PsbX, PsbY, PsbZ, Psb30/Ycf12, peripheral proteins PsbO, CyanoQ (PsbQ), PsbU, PsbV and a large number of cofactors. It forms dimeric complexes.

Its subcellular location is the cellular thylakoid membrane. Functionally, one of the components of the core complex of photosystem II (PSII). PSII is a light-driven water:plastoquinone oxidoreductase that uses light energy to abstract electrons from H(2)O, generating O(2) and a proton gradient subsequently used for ATP formation. It consists of a core antenna complex that captures photons, and an electron transfer chain that converts photonic excitation into a charge separation. The protein is Photosystem II reaction center protein K of Synechococcus sp. (strain WH7803).